We begin with the raw amino-acid sequence, 603 residues long: NADH-ubiquinone oxidoreductase chain 5 (603 aa).

The next 16 membrane-spanning stretches (helical) occupy residues tyrosine 4–isoleucine 24, serine 38–aspartate 58, methionine 87–tyrosine 107, leucine 122–isoleucine 142, tryptophan 144–alanine 160, alanine 171–leucine 191, threonine 211–leucine 233, threonine 241–isoleucine 261, leucine 272–alanine 292, isoleucine 301–asparagine 320, alanine 325–isoleucine 347, serine 370–tyrosine 390, asparagine 405–tyrosine 422, leucine 457–threonine 477, isoleucine 482–leucine 502, and glycine 582–isoleucine 602.

This sequence belongs to the complex I subunit 5 family. As to quaternary structure, core subunit of respiratory chain NADH dehydrogenase (Complex I) which is composed of 45 different subunits.

The protein resides in the mitochondrion inner membrane. The catalysed reaction is a ubiquinone + NADH + 5 H(+)(in) = a ubiquinol + NAD(+) + 4 H(+)(out). Its function is as follows. Core subunit of the mitochondrial membrane respiratory chain NADH dehydrogenase (Complex I) which catalyzes electron transfer from NADH through the respiratory chain, using ubiquinone as an electron acceptor. Essential for the catalytic activity and assembly of complex I. This is NADH-ubiquinone oxidoreductase chain 5 (MT-ND5) from Pan troglodytes (Chimpanzee).